Reading from the N-terminus, the 372-residue chain is DNA replication and repair protein RecF (372 aa).

Residue 30–37 participates in ATP binding; it reads GENAQGKT.

This sequence belongs to the RecF family.

The protein resides in the cytoplasm. Its function is as follows. The RecF protein is involved in DNA metabolism; it is required for DNA replication and normal SOS inducibility. RecF binds preferentially to single-stranded, linear DNA. It also seems to bind ATP. This is DNA replication and repair protein RecF from Geobacillus thermodenitrificans (strain NG80-2).